The sequence spans 62 residues: MAKECVITGRKSRSGNKRSHAMNSSKRTWKANLQKVRILVNGKPKKVWVSARALKSGKVERV.

The segment at 1 to 27 (MAKECVITGRKSRSGNKRSHAMNSSKR) is disordered. A compositionally biased stretch (basic residues) spans 10–20 (RKSRSGNKRSH).

This sequence belongs to the bacterial ribosomal protein bL28 family.

The chain is Large ribosomal subunit protein bL28 from Listeria innocua serovar 6a (strain ATCC BAA-680 / CLIP 11262).